We begin with the raw amino-acid sequence, 202 residues long: Imidazole glycerol phosphate synthase subunit HisH (202 aa).

In terms of domain architecture, Glutamine amidotransferase type-1 spans Arg-3–Cys-202. Catalysis depends on Cys-79, which acts as the Nucleophile. Active-site residues include His-183 and Glu-185.

In terms of assembly, heterodimer of HisH and HisF.

The protein localises to the cytoplasm. The enzyme catalyses 5-[(5-phospho-1-deoxy-D-ribulos-1-ylimino)methylamino]-1-(5-phospho-beta-D-ribosyl)imidazole-4-carboxamide + L-glutamine = D-erythro-1-(imidazol-4-yl)glycerol 3-phosphate + 5-amino-1-(5-phospho-beta-D-ribosyl)imidazole-4-carboxamide + L-glutamate + H(+). It carries out the reaction L-glutamine + H2O = L-glutamate + NH4(+). The protein operates within amino-acid biosynthesis; L-histidine biosynthesis; L-histidine from 5-phospho-alpha-D-ribose 1-diphosphate: step 5/9. In terms of biological role, IGPS catalyzes the conversion of PRFAR and glutamine to IGP, AICAR and glutamate. The HisH subunit catalyzes the hydrolysis of glutamine to glutamate and ammonia as part of the synthesis of IGP and AICAR. The resulting ammonia molecule is channeled to the active site of HisF. This chain is Imidazole glycerol phosphate synthase subunit HisH, found in Methanosarcina acetivorans (strain ATCC 35395 / DSM 2834 / JCM 12185 / C2A).